Here is a 216-residue protein sequence, read N- to C-terminus: NKG2-D type II integral membrane protein (216 aa).

Residues 1–51 are Cytoplasmic-facing; the sequence is MGWIRGRRPRHNLEMSEFHNYKLGLAKSDFSTRCQKQRCPVIKSKCRENAS. The helical; Signal-anchor for type II membrane protein transmembrane segment at 52 to 72 threads the bilayer; that stretch reads PLFFCCFIAVAMGIRFIIMVT. Residues 73–216 are Extracellular-facing; sequence IWSAVFLNSL…NTYICMQRTV (144 aa). 2 cysteine pairs are disulfide-bonded: cysteine 96–cysteine 105 and cysteine 99–cysteine 110. The C-type lectin domain maps to 98 to 213; sequence PCPKNWICYK…SIPNTYICMQ (116 aa). N-linked (GlcNAc...) asparagine glycosylation is found at asparagine 115, asparagine 131, asparagine 163, and asparagine 202. 2 disulfide bridges follow: cysteine 127–cysteine 211 and cysteine 189–cysteine 203.

In terms of assembly, homodimer; disulfide-linked. Heterohexamer composed of two subunits of KLRK1 and four subunits of HCST/DAP10. Interacts (via transmembrane domain) with HCST/DAP10 (via transmembrane domain); the interaction is required for KLRK1 NK cell surface and induces NK cell-mediated cytotoxicity. Can form disulfide-bonded heterodimer with CD94. Interacts with CEACAM1; recruits PTPN6 that dephosphorylates VAV1. Natural killer cells.

It is found in the cell membrane. Its function is as follows. Functions as an activating and costimulatory receptor involved in immunosurveillance upon binding to various cellular stress-inducible ligands displayed at the surface of autologous tumor cells and virus-infected cells. Provides both stimulatory and costimulatory innate immune responses on activated killer (NK) cells, leading to cytotoxic activity. Acts as a costimulatory receptor for T-cell receptor (TCR) in CD8(+) T-cell-mediated adaptive immune responses by amplifying T-cell activation. Stimulates perforin-mediated elimination of ligand-expressing tumor cells. Signaling involves calcium influx, culminating in the expression of TNF-alpha. Participates in NK cell-mediated bone marrow graft rejection. May play a regulatory role in differentiation and survival of NK cells. Binds to ligands belonging to various subfamilies of MHC class I-related glycoproteins. This is NKG2-D type II integral membrane protein (KLRK1) from Macaca fascicularis (Crab-eating macaque).